A 169-amino-acid polypeptide reads, in one-letter code: Probable phospholipid hydroperoxide glutathione peroxidase (169 aa).

Residue C43 is part of the active site.

Belongs to the glutathione peroxidase family.

The protein resides in the cytoplasm. The enzyme catalyses a hydroperoxy polyunsaturated fatty acid + 2 glutathione = a hydroxy polyunsaturated fatty acid + glutathione disulfide + H2O. Its function is as follows. Protects cells and enzymes from oxidative damage, by catalyzing the reduction of hydrogen peroxide, lipid peroxides and organic hydroperoxide, by glutathione. This Nicotiana tabacum (Common tobacco) protein is Probable phospholipid hydroperoxide glutathione peroxidase.